The chain runs to 473 residues: Zinc transporter SLC39A7 (473 aa).

The chain crosses the membrane as a helical span at residues 11-31 (VAVGLLTWAALGLLVAGHGGH). Basic and acidic residues-rich tracts occupy residues 44–56 (GHSHRHSHEDFHH) and 66–114 (HTHE…EHSH). Residues 44-120 (GHSHRHSHED…EHSHGGYGES (77 aa)) are disordered. Position 66 is a pros-methylhistidine (H66). A run of 3 helical transmembrane segments spans residues 138–158 (ALGATVLISAAPFFVLFLIPV), 169–189 (LQILLSFASGGLLGDAFLHLI), and 214–234 (GPILSVGLWVLSGIVAFLVVE). The interval 243–316 (GHEHSHGHGH…QHSGEEKAGS (74 aa)) is disordered. A phosphoserine mark is found at S278 and S279. The span at 298–316 (RPKDGPVRPQHSGEEKAGS) shows a compositional bias: basic and acidic residues. Residues 388–408 (LLTAVGALAGTAFALLTEGGA) traverse the membrane as a helical segment. A disordered region spans residues 428-473 (GDQAATQASPRSTSLPPVGEEDFREDPGPRQKGQQEKSGINVNCVS). The segment covering 431-442 (AATQASPRSTSL) has biased composition (polar residues). Over residues 452–462 (EDPGPRQKGQQ) the composition is skewed to basic and acidic residues. The segment covering 463-473 (EKSGINVNCVS) has biased composition (polar residues).

The protein belongs to the ZIP transporter (TC 2.A.5) family. KE4/Catsup subfamily. Homodimer. In terms of processing, methylation at some His residue by METTL9 leads to reduced zinc-binding. Rapidly phosphorylated by CK2 following Zn(2+) treatment. This phosphorylation is required for efficient cytosolic Zn(2+) release.

It is found in the endoplasmic reticulum membrane. The protein resides in the golgi apparatus. The protein localises to the cis-Golgi network membrane. The catalysed reaction is Zn(2+)(in) = Zn(2+)(out). Functionally, transports Zn(2+) from the endoplasmic reticulum (ER)/Golgi apparatus to the cytosol, playing an essential role in the regulation of cytosolic zinc levels. Acts as a gatekeeper of zinc release from intracellular stores, requiring post-translational activation by phosphorylation on residues, resulting in activation of multiple downstream pathways leading to cell growth and proliferation. Has an essential role in B cell development and is required for proper B cell receptor signaling. Plays an important role in maintaining intestinal epithelial homeostasis and skin dermis development by regulating ER function. Controls cell signaling pathways involved in glucose metabolism in skeletal muscle. Has a protective role against ER stress in different biological contexts. Mediates Zn(2+)-induced ferroptosis. The chain is Zinc transporter SLC39A7 (SLC39A7) from Sus scrofa (Pig).